We begin with the raw amino-acid sequence, 493 residues long: Cytochrome P450 monooxygenase astA (493 aa).

The chain crosses the membrane as a helical span at residues E5–Y25. N174 and N286 each carry an N-linked (GlcNAc...) asparagine glycan. C433 contributes to the heme binding site.

The protein belongs to the cytochrome P450 family. Heme is required as a cofactor.

The protein localises to the membrane. It catalyses the reaction asperterpenoid A + reduced [NADPH--hemoprotein reductase] + O2 = asperterpenoid C + oxidized [NADPH--hemoprotein reductase] + H2O + H(+). It functions in the pathway secondary metabolite biosynthesis; terpenoid biosynthesis. In terms of biological role, cytochrome P450 monooxygenase; part of the gene cluster that mediates the biosynthesis of the asperterpenoids, sesterterpenes that exhibit anti-tuberculosis activity. The first step of the pathway is performed by the sesterterpene synthase astC that possesses both prenyl transferase and terpene cyclase activity, converting isopentenyl diphosphate and dimethylallyl diphosphate into geranylfarnesyl diphosphate (GFPP) and further converting GFPP into preasperterpenoid A, respectively. The cytochrome P450 monooxygenase astB then dually oxidizes preasperterpenoid A to produce asperterpenoid A along with a minor product, asperterpenoid B. Finally, the cytochrome P450 monooxygenase astA converts asperterpenoid A into asperterpenoid C. The protein is Cytochrome P450 monooxygenase astA of Talaromyces wortmannii (Penicillium wortmannii).